Reading from the N-terminus, the 1065-residue chain is Carbamoyl phosphate synthase large chain (1065 aa).

The interval 1–401 is carboxyphosphate synthetic domain; sequence MPKRTDIETI…AMLKAVRSLE (401 aa). Arg129, Arg169, Gly175, Gly176, Lys208, Ile210, Glu215, Gly241, Ile242, His243, Gln284, and Glu298 together coordinate ATP. Residues 133–327 form the ATP-grasp 1 domain; that stretch reads RNLMYELGAP…IAKLAAKIAV (195 aa). The Mg(2+) site is built by Gln284, Glu298, and Asn300. Residues Gln284, Glu298, and Asn300 each coordinate Mn(2+). The tract at residues 402–546 is oligomerization domain; sequence TGQVHLELKH…YGTYEEENES (145 aa). A carbamoyl phosphate synthetic domain region spans residues 547 to 929; it reads IKSEKPSVVV…ALYKGLVAAG (383 aa). The ATP-grasp 2 domain maps to 671–861; that stretch reads EQALRDLNIP…MANIATKAIL (191 aa). ATP is bound by residues Arg707, Arg746, Leu748, Glu752, Gly777, Val778, His779, Ser780, Gln820, and Glu832. 3 residues coordinate Mg(2+): Gln820, Glu832, and Asn834. Mn(2+)-binding residues include Gln820, Glu832, and Asn834. The MGS-like domain occupies 930-1065; sequence MEIRTEGTVL…EEMPKAEVVH (136 aa). The allosteric domain stretch occupies residues 930–1065; it reads MEIRTEGTVL…EEMPKAEVVH (136 aa).

This sequence belongs to the CarB family. In terms of assembly, composed of two chains; the small (or glutamine) chain promotes the hydrolysis of glutamine to ammonia, which is used by the large (or ammonia) chain to synthesize carbamoyl phosphate. Tetramer of heterodimers (alpha,beta)4. Requires Mg(2+) as cofactor. Mn(2+) serves as cofactor.

It catalyses the reaction hydrogencarbonate + L-glutamine + 2 ATP + H2O = carbamoyl phosphate + L-glutamate + 2 ADP + phosphate + 2 H(+). It carries out the reaction hydrogencarbonate + NH4(+) + 2 ATP = carbamoyl phosphate + 2 ADP + phosphate + 2 H(+). It functions in the pathway amino-acid biosynthesis; L-arginine biosynthesis; carbamoyl phosphate from bicarbonate: step 1/1. The protein operates within pyrimidine metabolism; UMP biosynthesis via de novo pathway; (S)-dihydroorotate from bicarbonate: step 1/3. Large subunit of the glutamine-dependent carbamoyl phosphate synthetase (CPSase). CPSase catalyzes the formation of carbamoyl phosphate from the ammonia moiety of glutamine, carbonate, and phosphate donated by ATP, constituting the first step of 2 biosynthetic pathways, one leading to arginine and/or urea and the other to pyrimidine nucleotides. The large subunit (synthetase) binds the substrates ammonia (free or transferred from glutamine from the small subunit), hydrogencarbonate and ATP and carries out an ATP-coupled ligase reaction, activating hydrogencarbonate by forming carboxy phosphate which reacts with ammonia to form carbamoyl phosphate. The polypeptide is Carbamoyl phosphate synthase large chain (Lysinibacillus sphaericus (strain C3-41)).